The sequence spans 231 residues: MSTTVETARSSVIVAIDGPSGTGKSSTSKAVAAKLGLSYLDTGAQYRAITWWMLTNGVDVGNPEEIATAAAKPVIVSGTDPAAPTITVDGEDASGPIRTQEVTSKVSAVSAVPEVRTLITALQRSIAAAATGGIVVEGRDIGTTVLPDADLKIFLTASPEARAARRSGEVKGSDLSATREALIKRDAADSGRKTSPLAKADDAVEVDTTELTLQQVIECVVTLVEGKRVAA.

18 to 26 provides a ligand contact to ATP; sequence GPSGTGKSS.

This sequence belongs to the cytidylate kinase family. Type 1 subfamily.

The protein resides in the cytoplasm. The catalysed reaction is CMP + ATP = CDP + ADP. It carries out the reaction dCMP + ATP = dCDP + ADP. The polypeptide is Cytidylate kinase (Streptomyces griseus subsp. griseus (strain JCM 4626 / CBS 651.72 / NBRC 13350 / KCC S-0626 / ISP 5235)).